Reading from the N-terminus, the 683-residue chain is Methionine--tRNA ligase (683 aa).

The 'HIGH' region signature appears at 15-25 (PYANGPIHLGH). Zn(2+) is bound by residues cysteine 146, cysteine 149, cysteine 159, and cysteine 162. The short motif at 332 to 336 (KMSKS) is the 'KMSKS' region element. Residue lysine 335 coordinates ATP. The tRNA-binding domain occupies 581–683 (DFCKVDLRVA…AGAKAGQRVK (103 aa)).

This sequence belongs to the class-I aminoacyl-tRNA synthetase family. MetG type 1 subfamily. As to quaternary structure, homodimer. Requires Zn(2+) as cofactor.

Its subcellular location is the cytoplasm. It catalyses the reaction tRNA(Met) + L-methionine + ATP = L-methionyl-tRNA(Met) + AMP + diphosphate. Functionally, is required not only for elongation of protein synthesis but also for the initiation of all mRNA translation through initiator tRNA(fMet) aminoacylation. This is Methionine--tRNA ligase from Histophilus somni (strain 2336) (Haemophilus somnus).